Reading from the N-terminus, the 671-residue chain is ABC transporter ATP-binding protein/permease wht-1 (671 aa).

Residues 1-408 lie on the Cytoplasmic side of the membrane; it reads MHKAPISTLI…SWLTVIRDPN (408 aa). Residues 64-310 enclose the ABC transporter domain; the sequence is TNFVDRFRNN…FEKCGYPCPA (247 aa). 100-107 contacts ATP; it reads GSSGAGKT. Residues 409–429 form a helical membrane-spanning segment; the sequence is LLSVRLLQILITAFITGIVFF. Topologically, residues 430–451 are extracellular; it reads QTPVTPATIISINGIMFNHIRN. Residues 452–472 form a helical membrane-spanning segment; it reads MNFMLQFPNVPVITAELPIVL. The Cytoplasmic portion of the chain corresponds to 473–497; sequence RENANGVYRTSAYFLAKNIAELPQY. Residues 498–518 form a helical membrane-spanning segment; that stretch reads IILPILYNTIVYWMSGLYPNF. The Extracellular portion of the chain corresponds to 519 to 525; sequence WNYCFAS. Residues 526–546 form a helical membrane-spanning segment; sequence LVTILITNVAISISYAVATIF. Residues 547-550 are Cytoplasmic-facing; the sequence is ANTD. A helical transmembrane segment spans residues 551–571; sequence VAMTILPIFVVPIMAFGGFFI. Over 572–644 the chain is Extracellular; it reads TFDAIPSYFK…DFSASHKIFD (73 aa). A helical transmembrane segment spans residues 645–665; the sequence is ISILFGMFIGIRIIAYVALLI. Residues 666-671 lie on the Cytoplasmic side of the membrane; that stretch reads RSYNNT.

It belongs to the ABC transporter superfamily. ABCG family. Eye pigment precursor importer (TC 3.A.1.204) subfamily. Expressed in the intestine in both larvae and adults. Expressed in the gut of males.

It is found in the membrane. In terms of biological role, required for efficient RNA interference (RNAi). Plays a role in germline development. The chain is ABC transporter ATP-binding protein/permease wht-1 from Caenorhabditis elegans.